Consider the following 211-residue polypeptide: Imidazole glycerol phosphate synthase subunit HisH (211 aa).

Residues 4–211 (TVALLDYGSG…QLLRNWINHI (208 aa)) enclose the Glutamine amidotransferase type-1 domain. Catalysis depends on cysteine 82, which acts as the Nucleophile. Catalysis depends on residues histidine 192 and glutamate 194.

In terms of assembly, heterodimer of HisH and HisF.

It is found in the cytoplasm. The enzyme catalyses 5-[(5-phospho-1-deoxy-D-ribulos-1-ylimino)methylamino]-1-(5-phospho-beta-D-ribosyl)imidazole-4-carboxamide + L-glutamine = D-erythro-1-(imidazol-4-yl)glycerol 3-phosphate + 5-amino-1-(5-phospho-beta-D-ribosyl)imidazole-4-carboxamide + L-glutamate + H(+). It catalyses the reaction L-glutamine + H2O = L-glutamate + NH4(+). Its pathway is amino-acid biosynthesis; L-histidine biosynthesis; L-histidine from 5-phospho-alpha-D-ribose 1-diphosphate: step 5/9. Its function is as follows. IGPS catalyzes the conversion of PRFAR and glutamine to IGP, AICAR and glutamate. The HisH subunit catalyzes the hydrolysis of glutamine to glutamate and ammonia as part of the synthesis of IGP and AICAR. The resulting ammonia molecule is channeled to the active site of HisF. The sequence is that of Imidazole glycerol phosphate synthase subunit HisH from Corynebacterium efficiens (strain DSM 44549 / YS-314 / AJ 12310 / JCM 11189 / NBRC 100395).